A 58-amino-acid polypeptide reads, in one-letter code: Small ribosomal subunit protein bS21 (58 aa).

The span at 32 to 42 (VRKREHYEKPS) shows a compositional bias: basic and acidic residues. Residues 32–58 (VRKREHYEKPSVKKKKKSEAARKRKFK) are disordered. The segment covering 43-58 (VKKKKKSEAARKRKFK) has biased composition (basic residues).

The protein belongs to the bacterial ribosomal protein bS21 family.

The protein is Small ribosomal subunit protein bS21 of Clostridium botulinum (strain Okra / Type B1).